Consider the following 563-residue polypeptide: Arginine--tRNA ligase (563 aa).

Residues 121–131 carry the 'HIGH' region motif; the sequence is PNIAKPFSIGH.

The protein belongs to the class-I aminoacyl-tRNA synthetase family. As to quaternary structure, monomer.

The protein localises to the cytoplasm. The catalysed reaction is tRNA(Arg) + L-arginine + ATP = L-arginyl-tRNA(Arg) + AMP + diphosphate. The protein is Arginine--tRNA ligase of Streptococcus thermophilus (strain CNRZ 1066).